Here is a 399-residue protein sequence, read N- to C-terminus: Acetate kinase (399 aa).

Asn9 contributes to the Mg(2+) binding site. Lys16 is an ATP binding site. Arg90 contacts substrate. Catalysis depends on Asp147, which acts as the Proton donor/acceptor. ATP is bound by residues 207-211 (HIGNG), 282-284 (DLR), and 330-334 (GVGEN). Residue Glu384 participates in Mg(2+) binding.

It belongs to the acetokinase family. As to quaternary structure, homodimer. Mg(2+) is required as a cofactor. It depends on Mn(2+) as a cofactor.

It localises to the cytoplasm. The enzyme catalyses acetate + ATP = acetyl phosphate + ADP. It participates in metabolic intermediate biosynthesis; acetyl-CoA biosynthesis; acetyl-CoA from acetate: step 1/2. Catalyzes the formation of acetyl phosphate from acetate and ATP. Can also catalyze the reverse reaction. This chain is Acetate kinase, found in Staphylococcus saprophyticus subsp. saprophyticus (strain ATCC 15305 / DSM 20229 / NCIMB 8711 / NCTC 7292 / S-41).